Reading from the N-terminus, the 84-residue chain is Putative membrane protein insertion efficiency factor (84 aa).

Positions 63 to 84 (WGGSGYDPVPGADPEHDRRPRG) are disordered. The segment covering 75–84 (DPEHDRRPRG) has biased composition (basic and acidic residues).

The protein belongs to the UPF0161 family.

The protein localises to the cell inner membrane. Could be involved in insertion of integral membrane proteins into the membrane. The polypeptide is Putative membrane protein insertion efficiency factor (Cereibacter sphaeroides (strain ATCC 17029 / ATH 2.4.9) (Rhodobacter sphaeroides)).